The primary structure comprises 168 residues: S-ribosylhomocysteine lyase (168 aa).

Positions 54, 58, and 128 each coordinate Fe cation.

Belongs to the LuxS family. Homodimer. Fe cation is required as a cofactor.

The catalysed reaction is S-(5-deoxy-D-ribos-5-yl)-L-homocysteine = (S)-4,5-dihydroxypentane-2,3-dione + L-homocysteine. Functionally, involved in the synthesis of autoinducer 2 (AI-2) which is secreted by bacteria and is used to communicate both the cell density and the metabolic potential of the environment. The regulation of gene expression in response to changes in cell density is called quorum sensing. Catalyzes the transformation of S-ribosylhomocysteine (RHC) to homocysteine (HC) and 4,5-dihydroxy-2,3-pentadione (DPD). This is S-ribosylhomocysteine lyase from Mannheimia succiniciproducens (strain KCTC 0769BP / MBEL55E).